Here is a 505-residue protein sequence, read N- to C-terminus: MLWAGGMRLGMARILLMLVHAAAACEFGPMPYSVTGIVFRMTKPAALLLNQETARLIQASFKHAKFPNITGERSMRFLGTVAYTLANIQVSDLSIEQSEVELKENDAIDIAIKNVTAFFRGTLTYGYAGAWFLQLFHSVDFEIQSSIDLQINIKLLCQEEQVAADASDCYLSFHKLMLHLQGDKEPGWLKQLFTDFISFTLKFVLKRELCKEINLLAQVMANFVHNVAENFVQDEAIGLDISLASDPLIKANYLESHHEGLVLYKNYSDVLSDSVFSPSLLSESRMLYFWISEHILNSLASAAFLDGRLVLAIRGEKLQALFEFEDTEAQQKAVHLIFQGNSYNDSVAKVWSLALPEISLQPEGTVVKSLVAVEISIFPPGEEPLTALYMEEEITVTIQAAYVEKKLILRPVDSQIEFKVFNCTADPSGNDQSVRNFLQKMISAVGIPEVISKIEPALTSLMNSKGLHLFEIKNPEIITRKRYLIVQLDFSFPNHLLLDFLEKTL.

A signal peptide spans 1-24 (MLWAGGMRLGMARILLMLVHAAAA). Residues N68 and N114 are each glycosylated (N-linked (GlcNAc...) asparagine). A disulfide bond links C169 and C210. 3 N-linked (GlcNAc...) asparagine glycosylation sites follow: N266, N344, and N422.

It belongs to the BPI/LBP/Plunc superfamily. BPI/LBP family. In terms of tissue distribution, highly expressed in liver brain, heart, and spleen. Secreted in plasma.

Its subcellular location is the secreted. It catalyses the reaction cholesteryl (9Z-octadecenoate)(in) = cholesteryl (9Z-octadecenoate)(out). The catalysed reaction is 1,2,3-tri-(9Z-octadecenoyl)-glycerol(in) = 1,2,3-tri-(9Z-octadecenoyl)-glycerol(out). The enzyme catalyses cholesteryl (9Z,12Z)-octadecadienoate(in) = cholesteryl (9Z,12Z)-octadecadienoate(out). Its function is as follows. Involved in the transfer of neutral lipids, including cholesteryl ester and triglyceride, among lipoprotein particles. Allows the net movement of cholesteryl ester from high density lipoproteins/HDL to triglyceride-rich very low density lipoproteins/VLDL, and the equimolar transport of triglyceride from VLDL to HDL. Regulates the reverse cholesterol transport, by which excess cholesterol is removed from peripheral tissues and returned to the liver for elimination. The chain is Cholesteryl ester transfer protein from Gallus gallus (Chicken).